The primary structure comprises 422 residues: Isocitrate dehydrogenase [NADP] (422 aa).

Thr94 is a binding site for NADP(+). Ser103, Asn105, Arg109, Arg119, and Arg143 together coordinate D-threo-isocitrate. Asp310 is a Mg(2+) binding site. NADP(+)-binding positions include 344–350 (HGTAPKY), Asn357, Tyr396, and Arg400.

This sequence belongs to the isocitrate and isopropylmalate dehydrogenases family. In terms of assembly, homodimer. It depends on Mg(2+) as a cofactor. Requires Mn(2+) as cofactor.

It carries out the reaction D-threo-isocitrate + NADP(+) = 2-oxoglutarate + CO2 + NADPH. Catalyzes the oxidative decarboxylation of isocitrate to 2-oxoglutarate and carbon dioxide with the concomitant reduction of NADP(+). The sequence is that of Isocitrate dehydrogenase [NADP] (icd) from Staphylococcus aureus (strain COL).